Here is a 511-residue protein sequence, read N- to C-terminus: Pancreatic alpha-amylase (511 aa).

A signal peptide spans Met1–Ala15. Gln16 carries the post-translational modification Pyrrolidone carboxylic acid. Intrachain disulfides connect Cys43–Cys101, Cys85–Cys130, and Cys156–Cys175. The Ca(2+) site is built by Asn115, Arg173, and Asp182. Arg210 lines the chloride pocket. Asp212 functions as the Nucleophile in the catalytic mechanism. Residue His216 participates in Ca(2+) binding. Catalysis depends on Glu248, which acts as the Proton donor. Chloride contacts are provided by Asn313 and Arg352. 2 disulfide bridges follow: Cys393–Cys399 and Cys465–Cys477. An N-linked (GlcNAc...) asparagine glycan is attached at Asn476.

Belongs to the glycosyl hydrolase 13 family. As to quaternary structure, monomer. Binds to the sea anemone inhibitor helianthamide. Ca(2+) serves as cofactor. The cofactor is chloride. Detected in pancreas (at protein level).

It localises to the secreted. Its subcellular location is the extracellular space. The enzyme catalyses Endohydrolysis of (1-&gt;4)-alpha-D-glucosidic linkages in polysaccharides containing three or more (1-&gt;4)-alpha-linked D-glucose units.. This is Pancreatic alpha-amylase (AMY2A) from Homo sapiens (Human).